The primary structure comprises 335 residues: DNA primase small subunit PriS (335 aa).

Residues Asp-96, Asp-98, and Asp-243 contribute to the active site.

Belongs to the eukaryotic-type primase small subunit family. As to quaternary structure, heterodimer of a small subunit (PriS) and a large subunit (PriL). Requires Mg(2+) as cofactor. The cofactor is Mn(2+).

Functionally, catalytic subunit of DNA primase, an RNA polymerase that catalyzes the synthesis of short RNA molecules used as primers for DNA polymerase during DNA replication. The small subunit contains the primase catalytic core and has DNA synthesis activity on its own. Binding to the large subunit stabilizes and modulates the activity, increasing the rate of DNA synthesis while decreasing the length of the DNA fragments, and conferring RNA synthesis capability. The DNA polymerase activity may enable DNA primase to also catalyze primer extension after primer synthesis. May also play a role in DNA repair. In Archaeoglobus fulgidus (strain ATCC 49558 / DSM 4304 / JCM 9628 / NBRC 100126 / VC-16), this protein is DNA primase small subunit PriS.